Reading from the N-terminus, the 779-residue chain is uncharacterized protein (779 aa).

2 positions are modified to phosphoserine: Ser-97 and Ser-120. Positions 125-135 (EIDGEDEKKSV) are enriched in basic and acidic residues. The disordered stretch occupies residues 125-174 (EIDGEDEKKSVGQESITGSAKRKDRRSKTNGSKRQKAEANREPPSDISLS). Residues 144–158 (AKRKDRRSKTNGSKR) show a composition bias toward basic residues. Positions 159–168 (QKAEANREPP) are enriched in basic and acidic residues. ATP-binding positions include 215-222 (GPPGCGKT) and 533-540 (GPPGCGKT). The segment at 759–779 (DRQKYQRLAKRWSSASTNDAD) is disordered.

The protein belongs to the AAA ATPase family.

Its subcellular location is the nucleus. This is an uncharacterized protein from Schizosaccharomyces pombe (strain 972 / ATCC 24843) (Fission yeast).